Reading from the N-terminus, the 228-residue chain is Urease accessory protein UreE (228 aa).

Residues P188 to H228 form a disordered region. Residues S204 to H228 are compositionally biased toward basic and acidic residues.

The protein belongs to the UreE family.

The protein localises to the cytoplasm. Involved in urease metallocenter assembly. Binds nickel. Probably functions as a nickel donor during metallocenter assembly. The polypeptide is Urease accessory protein UreE (Yersinia kristensenii).